Reading from the N-terminus, the 616-residue chain is Chaperone protein HscA (616 aa).

This sequence belongs to the heat shock protein 70 family.

Functionally, chaperone involved in the maturation of iron-sulfur cluster-containing proteins. Has a low intrinsic ATPase activity which is markedly stimulated by HscB. Involved in the maturation of IscU. This Salmonella heidelberg (strain SL476) protein is Chaperone protein HscA.